A 142-amino-acid chain; its full sequence is Large ribosomal subunit protein uL13 (142 aa).

Belongs to the universal ribosomal protein uL13 family. In terms of assembly, part of the 50S ribosomal subunit.

Its function is as follows. This protein is one of the early assembly proteins of the 50S ribosomal subunit, although it is not seen to bind rRNA by itself. It is important during the early stages of 50S assembly. The chain is Large ribosomal subunit protein uL13 from Vibrio vulnificus (strain CMCP6).